Reading from the N-terminus, the 475-residue chain is Aspartyl/glutamyl-tRNA(Asn/Gln) amidotransferase subunit B (475 aa).

This sequence belongs to the GatB/GatE family. GatB subfamily. In terms of assembly, heterotrimer of A, B and C subunits.

It carries out the reaction L-glutamyl-tRNA(Gln) + L-glutamine + ATP + H2O = L-glutaminyl-tRNA(Gln) + L-glutamate + ADP + phosphate + H(+). The catalysed reaction is L-aspartyl-tRNA(Asn) + L-glutamine + ATP + H2O = L-asparaginyl-tRNA(Asn) + L-glutamate + ADP + phosphate + 2 H(+). In terms of biological role, allows the formation of correctly charged Asn-tRNA(Asn) or Gln-tRNA(Gln) through the transamidation of misacylated Asp-tRNA(Asn) or Glu-tRNA(Gln) in organisms which lack either or both of asparaginyl-tRNA or glutaminyl-tRNA synthetases. The reaction takes place in the presence of glutamine and ATP through an activated phospho-Asp-tRNA(Asn) or phospho-Glu-tRNA(Gln). The sequence is that of Aspartyl/glutamyl-tRNA(Asn/Gln) amidotransferase subunit B from Chlorobium limicola (strain DSM 245 / NBRC 103803 / 6330).